The chain runs to 1522 residues: Dicer-like protein 1 (1522 aa).

Over residues 1–12 (MTWAGDVEEQDD) the composition is skewed to acidic residues. The segment at 1-37 (MTWAGDVEEQDDYFSCSDVSTSGDRRKRAPQTVTQEE) is disordered. Residues 76–258 (LFLRAKMQNT…EHVREAAREL (183 aa)) enclose the Helicase ATP-binding domain. 89–96 (LDTGTGKT) contacts ATP. The DEAH box motif lies at 202–205 (DEAH). The 169-residue stretch at 408–576 (WLNLYYERTT…DVEQEKAELI (169 aa)) folds into the Helicase C-terminal domain. One can recognise a Dicer dsRNA-binding fold domain in the interval 600-700 (SLSILSHFVA…LPTISKYLPA (101 aa)). Positions 859–980 (PFWKWSPQSR…ICPEPLHISN (122 aa)) constitute a PAZ domain. RNase III domains are found at residues 995 to 1166 (IIHR…MQHH) and 1222 to 1373 (AHKI…VDSE). Mg(2+) is bound by residues glutamate 1262, aspartate 1359, and glutamate 1362. In terms of domain architecture, DRBM spans 1409–1478 (TRLSRLLSIN…SHAALEKLEG (70 aa)). Residues cysteine 1421, histidine 1449, cysteine 1490, and cysteine 1492 each contribute to the Zn(2+) site.

It belongs to the helicase family. Dicer subfamily. Requires Mg(2+) as cofactor. The cofactor is Mn(2+).

Dicer-like endonuclease involved in cleaving double-stranded RNA in the RNA interference (RNAi) pathway. Produces 21 to 25 bp dsRNAs (siRNAs) which target the selective destruction of homologous RNAs leading to sequence-specific suppression of gene expression, called post-transcriptional gene silencing (PTGS). Part of a broad host defense response against viral infection and transposons. The chain is Dicer-like protein 1 (DCL1) from Phaeosphaeria nodorum (strain SN15 / ATCC MYA-4574 / FGSC 10173) (Glume blotch fungus).